We begin with the raw amino-acid sequence, 156 residues long: Ribosomal RNA large subunit methyltransferase H (156 aa).

S-adenosyl-L-methionine is bound by residues Leu73, Gly104, and Leu123–Leu128.

This sequence belongs to the RNA methyltransferase RlmH family. In terms of assembly, homodimer.

Its subcellular location is the cytoplasm. It catalyses the reaction pseudouridine(1915) in 23S rRNA + S-adenosyl-L-methionine = N(3)-methylpseudouridine(1915) in 23S rRNA + S-adenosyl-L-homocysteine + H(+). Specifically methylates the pseudouridine at position 1915 (m3Psi1915) in 23S rRNA. The sequence is that of Ribosomal RNA large subunit methyltransferase H from Neisseria meningitidis serogroup A / serotype 4A (strain DSM 15465 / Z2491).